The sequence spans 315 residues: Thioredoxin reductase (315 aa).

45–52 (EGSTPGGK) provides a ligand contact to FAD. Cys145 and Cys148 are joined by a disulfide. Residue 288 to 297 (DCRSKHFRQI) participates in FAD binding.

Belongs to the class-II pyridine nucleotide-disulfide oxidoreductase family. As to quaternary structure, homodimer. It depends on FAD as a cofactor.

It is found in the cytoplasm. The catalysed reaction is [thioredoxin]-dithiol + NADP(+) = [thioredoxin]-disulfide + NADPH + H(+). This chain is Thioredoxin reductase (trxB), found in Mycoplasma pneumoniae (strain ATCC 29342 / M129 / Subtype 1) (Mycoplasmoides pneumoniae).